Reading from the N-terminus, the 359-residue chain is 3-dehydroquinate synthase (359 aa).

NAD(+) contacts are provided by residues 71-76 (DGEAHK), 105-109 (GVIGD), 129-130 (TT), K142, K151, and 169-172 (TLHT). Positions 184, 247, and 264 each coordinate Zn(2+).

This sequence belongs to the sugar phosphate cyclases superfamily. Dehydroquinate synthase family. It depends on NAD(+) as a cofactor. Co(2+) is required as a cofactor. Zn(2+) serves as cofactor.

It is found in the cytoplasm. The catalysed reaction is 7-phospho-2-dehydro-3-deoxy-D-arabino-heptonate = 3-dehydroquinate + phosphate. It functions in the pathway metabolic intermediate biosynthesis; chorismate biosynthesis; chorismate from D-erythrose 4-phosphate and phosphoenolpyruvate: step 2/7. Catalyzes the conversion of 3-deoxy-D-arabino-heptulosonate 7-phosphate (DAHP) to dehydroquinate (DHQ). In Neisseria meningitidis serogroup B (strain ATCC BAA-335 / MC58), this protein is 3-dehydroquinate synthase.